Here is a 208-residue protein sequence, read N- to C-terminus: MELKVLNTGGTETGEVVTLNDEIFGADISEHAMYLDVKSILANRRQGTHKAKTRAEVRGGGRKPFRQKGTGNARQGSTRSPLMIGGGTIFGPQPRSYDQKVNKKVKQLARRSALSAKAQAGQIVVVEDFRLGEIKTKPVADILKNLGLAEKKTLMLTPEYDMIIARSGRNIEALNIMSAEKASTYDILDSQAIVFQKAALKKIEDTLG.

The segment at Gln-46 to Ile-84 is disordered. Polar residues predominate over residues Gly-69–Ser-80.

This sequence belongs to the universal ribosomal protein uL4 family. Part of the 50S ribosomal subunit.

In terms of biological role, one of the primary rRNA binding proteins, this protein initially binds near the 5'-end of the 23S rRNA. It is important during the early stages of 50S assembly. It makes multiple contacts with different domains of the 23S rRNA in the assembled 50S subunit and ribosome. Functionally, forms part of the polypeptide exit tunnel. The chain is Large ribosomal subunit protein uL4 from Chlorobium limicola (strain DSM 245 / NBRC 103803 / 6330).